The sequence spans 273 residues: Cysteine protease S273R (273 aa).

Residues His168 and Asn187 contribute to the active site. Residue Gln226 coordinates substrate. The active-site Nucleophile is Cys232.

Belongs to the peptidase C63 family.

Its subcellular location is the host cytoplasm. The protein localises to the virion. Its function is as follows. Cysteine protease that plays several role during infection including processing of the structural polyprotein or inhibition of the host immune response. Catalyzes the maturation of the pp220 and pp62 polyprotein precursors into core-shell proteins. Plays a role in the disruption of host pyroptosis via specific cleavage of gasdermin D/GSDMD. In addition, strongly decreases the host cGAS-STING signaling by targeting IKBKE via its enzymatic activity. Also impairs host FOXJ1-mediated antiviral effect via degradation of FOXJ1. This African swine fever virus (isolate Tick/Malawi/Lil 20-1/1983) (ASFV) protein is Cysteine protease S273R.